The chain runs to 588 residues: Aspartate--tRNA ligase (588 aa).

E172 is a binding site for L-aspartate. The segment at 196-199 (QLFK) is aspartate. L-aspartate is bound at residue R218. ATP is bound by residues 218 to 220 (RDE) and Q227. H449 lines the L-aspartate pocket. E483 serves as a coordination point for ATP. L-aspartate is bound at residue R490. 535 to 538 (GLDR) provides a ligand contact to ATP.

It belongs to the class-II aminoacyl-tRNA synthetase family. Type 1 subfamily. As to quaternary structure, homodimer.

The protein resides in the cytoplasm. The enzyme catalyses tRNA(Asp) + L-aspartate + ATP = L-aspartyl-tRNA(Asp) + AMP + diphosphate. In terms of biological role, catalyzes the attachment of L-aspartate to tRNA(Asp) in a two-step reaction: L-aspartate is first activated by ATP to form Asp-AMP and then transferred to the acceptor end of tRNA(Asp). The chain is Aspartate--tRNA ligase from Histophilus somni (strain 2336) (Haemophilus somnus).